Reading from the N-terminus, the 161-residue chain is Putative pre-16S rRNA nuclease (161 aa).

This sequence belongs to the YqgF nuclease family.

Its subcellular location is the cytoplasm. Could be a nuclease involved in processing of the 5'-end of pre-16S rRNA. The chain is Putative pre-16S rRNA nuclease from Prochlorococcus marinus (strain MIT 9313).